Here is a 1297-residue protein sequence, read N- to C-terminus: MLDVNFFDELRIGLATADDIRQWSHGEVKKPETINYRTLKPEKDGLFCEKIFGPQRDWECYCGKYKRVRFKGIICERCGVEVTRSKVRRERMGHIELAASVTHIWYFKGVPSRLGYLLDLAPKDLEKIIYFASYVVTSVDAEARHRDLATIENEILAEKRQSENSRDSEIEKRAGKLEADLAELEAEGAKADVRRKVKEGGEREMRQIRDRAQREIDRLDEVLDTFRKLEPKQLVTDELLYRELRDRFGEYFTGGMGAEAIKALVQNMDLDAEAESLRETIRTGKGQRKIRALKRLKVVAAFLNTRNSPLGMVLDCVPVIPPDLRPMVQLDGGRFATSDLNDLYRRVINRNNRLKRLIDLGAPEIIVNNEKRMLQEAVDALFDNGRRGRPVTGPGNRPLKSLSDMLKGKQGRFRQNLLGKRVDYSGRSVIVVGPKLKLHQCGLPKQMALELFKPFVMKRLVDLNHAQNIKSAKRMVERQRPVVWDVLEEVIGEHPVLLNRAPTLHRLGIQAFEPQLVEGKAIQIHPLVCTAFNADFDGDQMAVHVPLSAEAQAEARILMLSSNNILKPADGKPVTMPTQDMIIGLYHLTHRTSGERGEGRAFSSDAEARMAFDNGELHLQAPVKIRLRGLVGVETGPGAESWTAPEGWVEGDPITVETTLGRVLFNEALPPGYRFVNYEIRKGQLSAIVNDLAERFPKVALAATLDGLKEAGFHWATWSGVTIGMEDVLAPPRKREVLDRYEKEADRIDKQYQRGLMTAEERRGELIEIWTKATNEVAKEMDTALPQENPLWKMINSGARGNLLQLRQIAAIRGLVANPKGEIIPRPIKASYREGLSVLEYFISTHGARKGLADTALRTADSGYLTRRLVDVSQDVIIREEDCGTDRAIPMQVGQQTGEAGSLVVHEHAETSVHARTLADDIKGPDGTVVAERGADINSILVDRIVAAGVESVRVRSVLTCESKLGVCGACYGRSLPTGKTVDVGEAVGIIAAQSIGEPGTQLTMRTFHTGGVAGEDITQGLPRVQEIFEARIPKGKAPIADTPGRVRLEDGERSRKIIVVPDDGSDEIVYDKISKRVRLLANDGDHVEVGEKLTVGTIDPHELLRILGPRAVQVHLTQEVQEVYRSQGVLIHDKHIEIIIRQMLKRVTVIDSGSTEFLPGVLVDRALFESENRRLVSEGGEPAAGRPVLMGITKASLATDSWLSAASFQETTRVLTDAAIHARSDSLIGLKENVIIGKLIPAGTGISKYRNVRVEPTEEAKAKVYSMTGYPETDYGFGPASGQAVPLDDFDFGSYR.

Zn(2+) contacts are provided by cysteine 60, cysteine 62, cysteine 75, and cysteine 78. Aspartate 535, aspartate 537, and aspartate 539 together coordinate Mg(2+). 4 residues coordinate Zn(2+): cysteine 883, cysteine 961, cysteine 968, and cysteine 971.

It belongs to the RNA polymerase beta' chain family. The RNAP catalytic core consists of 2 alpha, 1 beta, 1 beta' and 1 omega subunit. When a sigma factor is associated with the core the holoenzyme is formed, which can initiate transcription. Mg(2+) serves as cofactor. Zn(2+) is required as a cofactor.

The enzyme catalyses RNA(n) + a ribonucleoside 5'-triphosphate = RNA(n+1) + diphosphate. Functionally, DNA-dependent RNA polymerase catalyzes the transcription of DNA into RNA using the four ribonucleoside triphosphates as substrates. In Salinispora arenicola (strain CNS-205), this protein is DNA-directed RNA polymerase subunit beta'.